We begin with the raw amino-acid sequence, 203 residues long: GTP cyclohydrolase-2 (203 aa).

A GTP-binding site is contributed by 49–53 (RIHSE). Residues cysteine 54, cysteine 65, and cysteine 67 each coordinate Zn(2+). Residues glutamine 70, 92 to 94 (EGR), and threonine 114 each bind GTP. The Proton acceptor role is filled by aspartate 126. Residue arginine 128 is the Nucleophile of the active site. Residues threonine 149 and lysine 154 each contribute to the GTP site.

It belongs to the GTP cyclohydrolase II family. It depends on Zn(2+) as a cofactor.

The catalysed reaction is GTP + 4 H2O = 2,5-diamino-6-hydroxy-4-(5-phosphoribosylamino)-pyrimidine + formate + 2 phosphate + 3 H(+). Its pathway is cofactor biosynthesis; riboflavin biosynthesis; 5-amino-6-(D-ribitylamino)uracil from GTP: step 1/4. Catalyzes the conversion of GTP to 2,5-diamino-6-ribosylamino-4(3H)-pyrimidinone 5'-phosphate (DARP), formate and pyrophosphate. The chain is GTP cyclohydrolase-2 from Shewanella sp. (strain MR-7).